The primary structure comprises 387 residues: 3-ketoacyl-CoA thiolase (387 aa).

Cys91 serves as the catalytic Acyl-thioester intermediate. Catalysis depends on proton acceptor residues His343 and Cys373.

The protein belongs to the thiolase-like superfamily. Thiolase family. Heterotetramer of two alpha chains (FadB) and two beta chains (FadA).

It localises to the cytoplasm. It carries out the reaction an acyl-CoA + acetyl-CoA = a 3-oxoacyl-CoA + CoA. The protein operates within lipid metabolism; fatty acid beta-oxidation. In terms of biological role, catalyzes the final step of fatty acid oxidation in which acetyl-CoA is released and the CoA ester of a fatty acid two carbons shorter is formed. The chain is 3-ketoacyl-CoA thiolase from Shewanella baltica (strain OS155 / ATCC BAA-1091).